We begin with the raw amino-acid sequence, 115 residues long: Somatostatin-1 (115 aa).

A signal peptide spans 1–24 (MLSCRFQCALVLLSLAVVFSKVSA). Positions 25 to 88 (APSDLRLRQL…QDEVRLELDR (64 aa)) are excised as a propeptide. The segment at 65–95 (NDALDSSDLSRGADQDEVRLELDRSANSSPL) is disordered. The segment covering 75–88 (RGADQDEVRLELDR) has biased composition (basic and acidic residues). C104 and C115 are disulfide-bonded.

This sequence belongs to the somatostatin family.

It localises to the secreted. Its function is as follows. Somatostatin inhibits the release of somatotropin. In Protopterus annectens (African lungfish), this protein is Somatostatin-1 (sst1).